Here is a 916-residue protein sequence, read N- to C-terminus: Translation initiation factor IF-2 (916 aa).

Residues 50–326 form a disordered region; the sequence is NRDKESTSQP…NSTLQQGFNK (277 aa). Basic and acidic residues predominate over residues 109–241; it reads AQREAEEKAR…LAEENAEKWT (133 aa). Residues 277–291 show a composition bias toward basic residues; that stretch reads GRGRAAKAPRPKKNN. Over residues 292–304 the composition is skewed to basic and acidic residues; it reads RHSEKADREEARA. One can recognise a tr-type G domain in the interval 415-584; sequence SRAPVVTIMG…LLQAEVLELK (170 aa). The segment at 424 to 431 is G1; sequence GHVDHGKT. Residue 424–431 coordinates GTP; it reads GHVDHGKT. The segment at 449 to 453 is G2; the sequence is GITQH. The interval 470–473 is G3; sequence DTPG. GTP-binding positions include 470-474 and 524-527; these read DTPGH and NKID. Residues 524-527 are G4; it reads NKID. The G5 stretch occupies residues 560-562; sequence SAK.

The protein belongs to the TRAFAC class translation factor GTPase superfamily. Classic translation factor GTPase family. IF-2 subfamily.

It localises to the cytoplasm. Functionally, one of the essential components for the initiation of protein synthesis. Protects formylmethionyl-tRNA from spontaneous hydrolysis and promotes its binding to the 30S ribosomal subunits. Also involved in the hydrolysis of GTP during the formation of the 70S ribosomal complex. In Proteus mirabilis (strain HI4320), this protein is Translation initiation factor IF-2.